We begin with the raw amino-acid sequence, 627 residues long: F-box only protein 21 (627 aa).

Positions 27–76 (PSCLVQLPGEVLEYILCSGSLTALDIGRVSSTCRRLREVCQSSGQVWKEQ) constitute an F-box domain.

Directly interacts with SKP1 and CUL1.

Its function is as follows. Substrate-recognition component of the SCF (SKP1-CUL1-F-box protein)-type E3 ubiquitin ligase complex. This is F-box only protein 21 (Fbxo21) from Mus musculus (Mouse).